The chain runs to 247 residues: 6-carboxyhexanoate--CoA ligase (247 aa).

It belongs to the BioW family. As to quaternary structure, homodimer. Requires Mg(2+) as cofactor.

It catalyses the reaction heptanedioate + ATP + CoA = 6-carboxyhexanoyl-CoA + AMP + diphosphate. The protein operates within metabolic intermediate metabolism; pimeloyl-CoA biosynthesis; pimeloyl-CoA from pimelate: step 1/1. Catalyzes the transformation of pimelate into pimeloyl-CoA with concomitant hydrolysis of ATP to AMP. The polypeptide is 6-carboxyhexanoate--CoA ligase (Corynebacterium diphtheriae (strain ATCC 700971 / NCTC 13129 / Biotype gravis)).